The primary structure comprises 700 residues: Long chain acyl-CoA synthetase 7, peroxisomal (700 aa).

Positions 1–29 are disordered; it reads MEFASPEQRRLETIRSHIDTSPTNDQSSS. Residues 7–18 are compositionally biased toward basic and acidic residues; that stretch reads EQRRLETIRSHI. The Microbody targeting signal motif lies at 10–18; sequence RLETIRSHI. A compositionally biased stretch (polar residues) spans 19-29; that stretch reads DTSPTNDQSSS. 266–277 contributes to the ATP binding site; it reads ICYTSGTTGTPK. A fatty acid-binding region spans residues 526–550; the sequence is DGWLHTGDIGLWLPGGRLKIIDRKK. Residues 698–700 carry the Microbody targeting signal motif; it reads SKL.

This sequence belongs to the ATP-dependent AMP-binding enzyme family. As to quaternary structure, interacts with PEX5. Requires Mg(2+) as cofactor. Expressed in roots, stems, leaves flowers and germinating seedling. Preferentially expressed in seeds.

It is found in the peroxisome. The catalysed reaction is a long-chain fatty acid + ATP + CoA = a long-chain fatty acyl-CoA + AMP + diphosphate. It carries out the reaction decanoate + ATP + CoA = decanoyl-CoA + AMP + diphosphate. It catalyses the reaction dodecanoate + ATP + CoA = dodecanoyl-CoA + AMP + diphosphate. The enzyme catalyses tetradecanoate + ATP + CoA = tetradecanoyl-CoA + AMP + diphosphate. The catalysed reaction is hexadecanoate + ATP + CoA = hexadecanoyl-CoA + AMP + diphosphate. It carries out the reaction (9Z)-octadecenoate + ATP + CoA = (9Z)-octadecenoyl-CoA + AMP + diphosphate. It catalyses the reaction (9Z,12Z)-octadecadienoate + ATP + CoA = (9Z,12Z)-octadecadienoyl-CoA + AMP + diphosphate. The enzyme catalyses (9Z,12Z,15Z)-octadecatrienoate + ATP + CoA = (9Z,12Z,15Z)-octadecatrienoyl-CoA + AMP + diphosphate. It participates in lipid metabolism; fatty acid metabolism. In terms of biological role, activation of long-chain fatty acids for both synthesis of cellular lipids, and degradation via beta-oxidation. Preferentially uses palmitate, palmitoleate, oleate, linoleate and eicosenoate as substrates. Can use myristate and linolenate as substrates. Functions redundantly with LACS6 in lipid mobilization for beta-oxidation during seed germination, which is essential for postgerminative growth and seedling establishment. The protein is Long chain acyl-CoA synthetase 7, peroxisomal of Arabidopsis thaliana (Mouse-ear cress).